Consider the following 90-residue polypeptide: Progonadoliberin-1 (90 aa).

Positions methionine 1–glycine 24 are cleaved as a signal peptide. The residue at position 25 (glutamine 25) is a Pyrrolidone carboxylic acid. The residue at position 34 (glycine 34) is a Glycine amide.

This sequence belongs to the GnRH family. In terms of tissue distribution, forebrain.

It is found in the secreted. Its function is as follows. Stimulates the secretion of gonadotropins. The protein is Progonadoliberin-1 (gnrh1) of Aquarana catesbeiana (American bullfrog).